We begin with the raw amino-acid sequence, 154 residues long: Fimbrial protein (154 aa).

Residues 1 to 6 constitute a propeptide, leader sequence; sequence MKAQKG. The residue at position 7 (Phe7) is an N-methylphenylalanine. The helical transmembrane segment at 7-27 threads the bilayer; sequence FTLIELMIVVAIIGILAAIAI. A disulfide bridge links Cys133 with Cys151. O-linked (FucNAc...) serine glycosylation occurs at Ser154.

Belongs to the N-Me-Phe pilin family. The pili are polar flexible filaments of about 5.4 nanometers diameter and 2.5 micrometers average length; they consist of only a single polypeptide chain arranged in a helical configuration of five subunits per turn in the assembled pilus. In terms of processing, O-glycosylated; glycan consists of 5NbetaOHC47NFmPse(alpha2-4)Xyl(beta1-3)FucNAc in beta1-O linkage to Ser.

Its subcellular location is the fimbrium. It is found in the membrane. The protein is Fimbrial protein (pilA) of Pseudomonas aeruginosa.